The following is a 144-amino-acid chain: Large ribosomal subunit protein uL13 (144 aa).

The protein belongs to the universal ribosomal protein uL13 family. As to quaternary structure, part of the 50S ribosomal subunit.

Its function is as follows. This protein is one of the early assembly proteins of the 50S ribosomal subunit, although it is not seen to bind rRNA by itself. It is important during the early stages of 50S assembly. The protein is Large ribosomal subunit protein uL13 of Moorella thermoacetica (strain ATCC 39073 / JCM 9320).